The following is a 366-amino-acid chain: CRS2-associated factor 2, mitochondrial (366 aa).

Residues 1–14 (MLLPRDLLLLPWRR) constitute a mitochondrion transit peptide. Residues 24-82 (RRLNHHRAPPFSDPDDDPPFTRLAERPPRAPSKKKKKEEEDQGGRIRPPEPASSDLPFD) are disordered. Over residues 60–71 (KEEEDQGGRIRP) the composition is skewed to basic and acidic residues. CRM domains follow at residues 143 to 241 (EPLA…QRPQ) and 263 to 359 (DGLT…SVSL).

In terms of assembly, part of large ribonucleo-protein complexes that include group IIB introns.

The protein resides in the mitochondrion. May be involved in the splicing of group IIB introns in mitochondria. In Oryza sativa subsp. japonica (Rice), this protein is CRS2-associated factor 2, mitochondrial.